A 337-amino-acid chain; its full sequence is MLNFLQSVQFVKEVEKKIIEYDKDIAFNEAIILYEIAKHDADLVKNLASTINQHYFKNTIELCSIYPAKVGLCPQDCKFCSQSIHHSCLIEIKDLAALDEVIEYLEYVISFPIKRFCLVTSGEKLDDSEFEKILDIYSHISKNYNILLCASLGFLTQERAKKLLKVGVVKYHNNLETSSTYFKNICSTHTQQQKIETLKIAKEAGLQICSGGIISMGEDMIERIKLAFELRELDVDSVPINILNPIKGTPLEDIKIIDKNEIFITLALFRIVLPKKTILLAGGKENALGDMEKMAYECGVNGCMVGNYLTTRGMGIREKIEMLESLDLKFQTNMHNN.

The Radical SAM core domain occupies 55–284; sequence YFKNTIELCS…KKTILLAGGK (230 aa). Residues Cys73, Cys77, and Cys80 each coordinate [4Fe-4S] cluster. [2Fe-2S] cluster is bound by residues Cys117, Cys149, and Cys209.

It belongs to the radical SAM superfamily. Biotin synthase family. Homodimer. It depends on [4Fe-4S] cluster as a cofactor. Requires [2Fe-2S] cluster as cofactor.

It catalyses the reaction (4R,5S)-dethiobiotin + (sulfur carrier)-SH + 2 reduced [2Fe-2S]-[ferredoxin] + 2 S-adenosyl-L-methionine = (sulfur carrier)-H + biotin + 2 5'-deoxyadenosine + 2 L-methionine + 2 oxidized [2Fe-2S]-[ferredoxin]. Its pathway is cofactor biosynthesis; biotin biosynthesis; biotin from 7,8-diaminononanoate: step 2/2. Catalyzes the conversion of dethiobiotin (DTB) to biotin by the insertion of a sulfur atom into dethiobiotin via a radical-based mechanism. This chain is Biotin synthase, found in Caldicellulosiruptor bescii (strain ATCC BAA-1888 / DSM 6725 / KCTC 15123 / Z-1320) (Anaerocellum thermophilum).